The chain runs to 261 residues: Zinc finger protein 664 (261 aa).

C2H2-type zinc fingers lie at residues 3–25 (YKCPMCREFFSERADLFMHQKIH), 31–53 (HKCDKCDKGFFHISELHIHWRDH), 59–81 (YKCDDCVKDFSTTTKLNRHKKIH), 87–109 (YKCYECGKAFNWSSHLQIHMRVH), 115–137 (YVCSECGRGFSNSSNLCMHQRVH), 143–165 (FKCEECGKAFRHTSSLCMHQRVH), 171–193 (YKCYECGKAFSQSSSLCIHQRVH), 199–221 (YRCCGCGKAFSQSSSLCIHQRVH), and 227–249 (FKCDECGKAFSQSTSLCIHQRVH). K257 is covalently cross-linked (Glycyl lysine isopeptide (Lys-Gly) (interchain with G-Cter in SUMO2)).

Belongs to the krueppel C2H2-type zinc-finger protein family.

The protein localises to the nucleus. Its function is as follows. May be involved in transcriptional regulation. This is Zinc finger protein 664 (Znf664) from Mus musculus (Mouse).